The sequence spans 213 residues: Protein-L-isoaspartate O-methyltransferase 1 (213 aa).

S64 is an active-site residue.

Belongs to the methyltransferase superfamily. L-isoaspartyl/D-aspartyl protein methyltransferase family.

The protein localises to the cytoplasm. The catalysed reaction is [protein]-L-isoaspartate + S-adenosyl-L-methionine = [protein]-L-isoaspartate alpha-methyl ester + S-adenosyl-L-homocysteine. Functionally, catalyzes the methyl esterification of L-isoaspartyl residues in peptides and proteins that result from spontaneous decomposition of normal L-aspartyl and L-asparaginyl residues. It plays a role in the repair and/or degradation of damaged proteins. This chain is Protein-L-isoaspartate O-methyltransferase 1, found in Nitrosococcus oceani (strain ATCC 19707 / BCRC 17464 / JCM 30415 / NCIMB 11848 / C-107).